The primary structure comprises 390 residues: MLPDLTDIGTDPASTRVVVAMSGGVDSSVVAGLLARAGFDVVGVTLQLYDQGEAARRKGACCAGQDIYDARDVADRLGIPHYVLDYESRFREEVIERFADSYAAGFTPIPCVDCNRTVKFRDLLATAEDLGASVLATGHYVASRALPDGRRGLFRAAEENRDQSYFLYATTQAQATKLRFPLGGMRKSDVRALAAELGLPVADKPDSQDICFVPGGDYAEVVERLRPEAGEAGDIVHLDGRVLGRHRGVMHYTIGQRKGLGISTPEPLYVVAIDAARREVRVGPREALAVRSIGLTDINWLGDVPLLDACAAEQDIYVKVRSTRPPTPARLLRDADGAPTVELLAGEEGVAPGQACVFYDAASGAARLLGGGTIVRAERAGRHLAAAQVA.

ATP contacts are provided by residues 20 to 27 (AMSGGVDS) and L46. C114 serves as the catalytic Nucleophile. The cysteines at positions 114 and 211 are disulfide-linked. G138 provides a ligand contact to ATP. The interval 161–163 (RDQ) is interaction with tRNA. C211 serves as the catalytic Cysteine persulfide intermediate.

This sequence belongs to the MnmA/TRMU family.

The protein resides in the cytoplasm. It carries out the reaction S-sulfanyl-L-cysteinyl-[protein] + uridine(34) in tRNA + AH2 + ATP = 2-thiouridine(34) in tRNA + L-cysteinyl-[protein] + A + AMP + diphosphate + H(+). Its function is as follows. Catalyzes the 2-thiolation of uridine at the wobble position (U34) of tRNA, leading to the formation of s(2)U34. In Azorhizobium caulinodans (strain ATCC 43989 / DSM 5975 / JCM 20966 / LMG 6465 / NBRC 14845 / NCIMB 13405 / ORS 571), this protein is tRNA-specific 2-thiouridylase MnmA.